A 436-amino-acid chain; its full sequence is Adenosylhomocysteinase (436 aa).

Positions 62, 136, and 161 each coordinate substrate. Residue 162-164 (TTT) participates in NAD(+) binding. 2 residues coordinate substrate: lysine 191 and aspartate 195. Residues asparagine 196, 225-230 (GFGDVG), glutamate 248, asparagine 283, 304-306 (IGH), and asparagine 352 each bind NAD(+).

Belongs to the adenosylhomocysteinase family. NAD(+) is required as a cofactor.

It localises to the cytoplasm. It carries out the reaction S-adenosyl-L-homocysteine + H2O = L-homocysteine + adenosine. The protein operates within amino-acid biosynthesis; L-homocysteine biosynthesis; L-homocysteine from S-adenosyl-L-homocysteine: step 1/1. Its function is as follows. May play a key role in the regulation of the intracellular concentration of adenosylhomocysteine. The protein is Adenosylhomocysteinase of Leptospira borgpetersenii serovar Hardjo-bovis (strain JB197).